Reading from the N-terminus, the 135-residue chain is Holo-[acyl-carrier-protein] synthase (135 aa).

Residues aspartate 8 and glutamate 57 each contribute to the Mg(2+) site.

Belongs to the P-Pant transferase superfamily. AcpS family. Mg(2+) is required as a cofactor.

The protein localises to the cytoplasm. The enzyme catalyses apo-[ACP] + CoA = holo-[ACP] + adenosine 3',5'-bisphosphate + H(+). Transfers the 4'-phosphopantetheine moiety from coenzyme A to a Ser of acyl-carrier-protein. The polypeptide is Holo-[acyl-carrier-protein] synthase (Methylobacterium sp. (strain 4-46)).